An 847-amino-acid polypeptide reads, in one-letter code: Nitrite reductase (NADH) large subunit (847 aa).

44 to 79 (YDRVHLSSYFSHHTAEELSLVREGFYEKHGIKVLVG) is a binding site for FAD. 193–225 (LRRKIESMGVRVHTSKNTLEIVQEGVEARKTMR) contacts NAD(+). [2Fe-2S] cluster contacts are provided by Cys-425, Cys-427, Cys-459, and Cys-462. Cys-641, Cys-647, Cys-681, and Cys-685 together coordinate [4Fe-4S] cluster. Cys-685 lines the siroheme pocket.

This sequence belongs to the nitrite and sulfite reductase 4Fe-4S domain family. In terms of assembly, homodimer which associates with NirD. Requires siroheme as cofactor. [2Fe-2S] cluster is required as a cofactor. [4Fe-4S] cluster serves as cofactor. It depends on FAD as a cofactor.

The catalysed reaction is NH4(+) + 3 NAD(+) + 2 H2O = nitrite + 3 NADH + 5 H(+). The protein operates within nitrogen metabolism; nitrate reduction (assimilation). The chain is Nitrite reductase (NADH) large subunit (nirB) from Escherichia coli (strain K12).